Here is a 220-residue protein sequence, read N- to C-terminus: Ribosomal RNA large subunit methyltransferase E (220 aa).

Residues G60, W62, D92, D108, and D133 each coordinate S-adenosyl-L-methionine. K173 acts as the Proton acceptor in catalysis. The interval 195–220 (APRKPKASRDKSSETFILGRHLKQPR) is disordered.

This sequence belongs to the class I-like SAM-binding methyltransferase superfamily. RNA methyltransferase RlmE family.

It is found in the cytoplasm. The enzyme catalyses uridine(2552) in 23S rRNA + S-adenosyl-L-methionine = 2'-O-methyluridine(2552) in 23S rRNA + S-adenosyl-L-homocysteine + H(+). Its function is as follows. Specifically methylates the uridine in position 2552 of 23S rRNA at the 2'-O position of the ribose in the fully assembled 50S ribosomal subunit. The polypeptide is Ribosomal RNA large subunit methyltransferase E (Burkholderia pseudomallei (strain 1710b)).